A 123-amino-acid polypeptide reads, in one-letter code: Small ribosomal subunit protein uS12 (123 aa).

Position 89 is a 3-methylthioaspartic acid (Asp-89).

This sequence belongs to the universal ribosomal protein uS12 family. Part of the 30S ribosomal subunit. Contacts proteins S8 and S17. May interact with IF1 in the 30S initiation complex.

In terms of biological role, with S4 and S5 plays an important role in translational accuracy. Interacts with and stabilizes bases of the 16S rRNA that are involved in tRNA selection in the A site and with the mRNA backbone. Located at the interface of the 30S and 50S subunits, it traverses the body of the 30S subunit contacting proteins on the other side and probably holding the rRNA structure together. The combined cluster of proteins S8, S12 and S17 appears to hold together the shoulder and platform of the 30S subunit. This Anaeromyxobacter sp. (strain Fw109-5) protein is Small ribosomal subunit protein uS12.